The primary structure comprises 201 residues: Alanine--tRNA ligase (201 aa).

This sequence belongs to the class-II aminoacyl-tRNA synthetase family. The cofactor is Zn(2+).

It is found in the cytoplasm. The enzyme catalyses tRNA(Ala) + L-alanine + ATP = L-alanyl-tRNA(Ala) + AMP + diphosphate. In terms of biological role, catalyzes the attachment of alanine to tRNA(Ala) in a two-step reaction: alanine is first activated by ATP to form Ala-AMP and then transferred to the acceptor end of tRNA(Ala). Also edits incorrectly charged Ser-tRNA(Ala) and Gly-tRNA(Ala) via its editing domain. This is Alanine--tRNA ligase (alaS) from Rhizobium leguminosarum bv. viciae.